We begin with the raw amino-acid sequence, 694 residues long: Elongation factor G (694 aa).

The 280-residue stretch at 9 to 288 (DAIRNIGIMA…VIVKWLPSPL (280 aa)) folds into the tr-type G domain. GTP is bound by residues 18 to 25 (AHIDAGKT), 82 to 86 (DTPGH), and 136 to 139 (NKMD).

This sequence belongs to the TRAFAC class translation factor GTPase superfamily. Classic translation factor GTPase family. EF-G/EF-2 subfamily.

The protein resides in the cytoplasm. Its function is as follows. Catalyzes the GTP-dependent ribosomal translocation step during translation elongation. During this step, the ribosome changes from the pre-translocational (PRE) to the post-translocational (POST) state as the newly formed A-site-bound peptidyl-tRNA and P-site-bound deacylated tRNA move to the P and E sites, respectively. Catalyzes the coordinated movement of the two tRNA molecules, the mRNA and conformational changes in the ribosome. The chain is Elongation factor G from Chlamydia trachomatis serovar L2b (strain UCH-1/proctitis).